Consider the following 376-residue polypeptide: Phospho-N-acetylmuramoyl-pentapeptide-transferase (376 aa).

10 consecutive transmembrane segments (helical) span residues 28–48 (RTIM…PWFI), 76–96 (TMGG…WADL), 100–120 (FVLA…LDDF), 135–155 (YKLI…FLLA), 179–199 (YPIE…VVAT), 211–231 (GLAI…AYIV), 252–272 (AGEL…FLWY), 279–299 (VFMG…LAVF), 307–327 (IILG…VLSF), and 353–373 (KIIV…LASM).

This sequence belongs to the glycosyltransferase 4 family. MraY subfamily. Requires Mg(2+) as cofactor.

Its subcellular location is the cell inner membrane. It carries out the reaction UDP-N-acetyl-alpha-D-muramoyl-L-alanyl-gamma-D-glutamyl-meso-2,6-diaminopimeloyl-D-alanyl-D-alanine + di-trans,octa-cis-undecaprenyl phosphate = di-trans,octa-cis-undecaprenyl diphospho-N-acetyl-alpha-D-muramoyl-L-alanyl-D-glutamyl-meso-2,6-diaminopimeloyl-D-alanyl-D-alanine + UMP. It participates in cell wall biogenesis; peptidoglycan biosynthesis. Functionally, catalyzes the initial step of the lipid cycle reactions in the biosynthesis of the cell wall peptidoglycan: transfers peptidoglycan precursor phospho-MurNAc-pentapeptide from UDP-MurNAc-pentapeptide onto the lipid carrier undecaprenyl phosphate, yielding undecaprenyl-pyrophosphoryl-MurNAc-pentapeptide, known as lipid I. In Sorangium cellulosum (strain So ce56) (Polyangium cellulosum (strain So ce56)), this protein is Phospho-N-acetylmuramoyl-pentapeptide-transferase.